The following is a 96-amino-acid chain: LSM complex subunit lsm2 (96 aa).

The region spanning 2-76 (LFYSFFKTLI…VRYVHMSSAY (75 aa)) is the Sm domain.

This sequence belongs to the snRNP Sm proteins family. Component of the heptameric LSM1-LSM7 complex that forms a seven-membered ring structure with a donut shape. The LSm subunits are arranged in the order lsm1, lsm2, lsm3, lsm6, lsm5, lsm7 and lsm4. Component of the heptameric LSM2-LSM8 complex that forms a seven-membered ring structure with a donut shape. The LSm subunits are arranged in the order lsm8, lsm2, lsm3, lsm6, lsm5, lsm7 and lsm4.

It localises to the nucleus. It is found in the cytoplasm. Its function is as follows. Component of LSm protein complexes, which are involved in RNA processing and may function in a chaperone-like manner. Component of the cytoplasmic LSM1-LSM7 complex which is involved in mRNA degradation by activating the decapping step. The LSM1-LSM7 complex loads onto the 3'-end of single stranded RNA. Component of the nuclear LSM2-LSM8 complex, which is involved in spliceosome assembly. The LSM2-LSM8 complex plays a role in the biogenesis of the spliceosomal U4/U6-U5 tri-snRNP complex by accelerating prp24-mediated annealing of U4/U6 di-snRNA. The LSM2-LSM8 complex binds U6 snRNA terminating with a cyclic 2',3' phosphate group; RNA with an unmodified 3' hydroxyl or non-cyclic 3' phosphate is bound less tightly. The polypeptide is LSM complex subunit lsm2 (lsm2) (Schizosaccharomyces pombe (strain 972 / ATCC 24843) (Fission yeast)).